The sequence spans 345 residues: Fructose-1,6-bisphosphatase class 1 1 (345 aa).

4 residues coordinate Mg(2+): Glu90, Asp109, Leu111, and Asp112. Substrate contacts are provided by residues Asp112–Ser115 and Asn200. Glu272 provides a ligand contact to Mg(2+).

Belongs to the FBPase class 1 family. Homotetramer. It depends on Mg(2+) as a cofactor.

The protein localises to the cytoplasm. The catalysed reaction is beta-D-fructose 1,6-bisphosphate + H2O = beta-D-fructose 6-phosphate + phosphate. The protein operates within carbohydrate biosynthesis; gluconeogenesis. The polypeptide is Fructose-1,6-bisphosphatase class 1 1 (Nitrobacter hamburgensis (strain DSM 10229 / NCIMB 13809 / X14)).